Here is a 461-residue protein sequence, read N- to C-terminus: Photosystem II CP43 reaction center protein (461 aa).

The propeptide occupies 1–2 (ME). At T3 the chain carries N-acetylthreonine. T3 is subject to Phosphothreonine. 5 helical membrane-spanning segments follow: residues 57–81 (LFEV…PHLA), 122–143 (LIGP…KDKN), 166–188 (KALY…RIIT), 243–263 (QPWA…LSYS), and 279–300 (WFNN…ASQS). A [CaMn4O5] cluster-binding site is contributed by E355. A helical membrane pass occupies residues 435-459 (RARAAAAGFEKGIDRFNEPTLSLRP).

This sequence belongs to the PsbB/PsbC family. PsbC subfamily. As to quaternary structure, PSII is composed of 1 copy each of membrane proteins PsbA, PsbB, PsbC, PsbD, PsbE, PsbF, PsbH, PsbI, PsbJ, PsbK, PsbL, PsbM, PsbT, PsbX, PsbY, PsbZ, Psb30/Ycf12, at least 3 peripheral proteins of the oxygen-evolving complex and a large number of cofactors. It forms dimeric complexes. Binds multiple chlorophylls and provides some of the ligands for the Ca-4Mn-5O cluster of the oxygen-evolving complex. It may also provide a ligand for a Cl- that is required for oxygen evolution. PSII binds additional chlorophylls, carotenoids and specific lipids. is required as a cofactor.

The protein localises to the plastid. The protein resides in the chloroplast thylakoid membrane. One of the components of the core complex of photosystem II (PSII). It binds chlorophyll and helps catalyze the primary light-induced photochemical processes of PSII. PSII is a light-driven water:plastoquinone oxidoreductase, using light energy to abstract electrons from H(2)O, generating O(2) and a proton gradient subsequently used for ATP formation. The polypeptide is Photosystem II CP43 reaction center protein (Oedogonium cardiacum (Filamentous green alga)).